The primary structure comprises 29 residues: Glucagon (29 aa).

The protein belongs to the glucagon family.

The protein localises to the secreted. In terms of biological role, promotes hydrolysis of glycogen and lipids, and raises the blood sugar level. In Torpedo marmorata (Marbled electric ray), this protein is Glucagon (gcg).